A 439-amino-acid polypeptide reads, in one-letter code: Serine/threonine-protein kinase 2 (439 aa).

Residues 87 to 439 form the Protein kinase domain; the sequence is NDDFYHISTG…IFSDWINGGN (353 aa). Residues 93 to 101 and K117 contribute to the ATP site; that span reads ISTGGYGIV. Residue D307 is the Proton acceptor of the active site.

It belongs to the protein kinase superfamily. Ser/Thr protein kinase family. Poxviruses subfamily. In terms of processing, phosphorylated in vivo. Autophosphorylated in vitro.

The protein resides in the host endoplasmic reticulum. The protein localises to the host endoplasmic reticulum-Golgi intermediate compartment. The catalysed reaction is L-seryl-[protein] + ATP = O-phospho-L-seryl-[protein] + ADP + H(+). It catalyses the reaction L-threonyl-[protein] + ATP = O-phospho-L-threonyl-[protein] + ADP + H(+). Its function is as follows. Essential serine-protein kinase involved in the early stage of virion morphogenesis. The chain is Serine/threonine-protein kinase 2 (OPG054) from Vaccinia virus (strain Copenhagen) (VACV).